The following is an 864-amino-acid chain: Leucine--tRNA ligase (864 aa).

The 'HIGH' region motif lies at 42-52; that stretch reads PYPSGKLHMGH. The short motif at 624-628 is the 'KMSKS' region element; the sequence is KMSKS. An ATP-binding site is contributed by lysine 627.

This sequence belongs to the class-I aminoacyl-tRNA synthetase family.

It localises to the cytoplasm. The enzyme catalyses tRNA(Leu) + L-leucine + ATP = L-leucyl-tRNA(Leu) + AMP + diphosphate. In Burkholderia ambifaria (strain ATCC BAA-244 / DSM 16087 / CCUG 44356 / LMG 19182 / AMMD) (Burkholderia cepacia (strain AMMD)), this protein is Leucine--tRNA ligase.